Here is a 510-residue protein sequence, read N- to C-terminus: Photosystem II CP47 reaction center protein (510 aa).

Residues 2–16 (GLPWYRVHTVLINDP) lie on the Cytoplasmic side of the membrane. Residues 17–37 (GRLIAAHLMHTALVAGWAGSM) traverse the membrane as a helical segment. Topologically, residues 38–94 (ALYELATFDPSDPVLNPMWRQGMFVLPFMARLGVTGSWSGWSITGETGIDPGFWSFE) are lumenal. The chain crosses the membrane as a helical span at residues 95–116 (GVALAHIVLSGLLFLAACWHWV). Residues 117–134 (YWDLELFRDPRTGEPALD) are Cytoplasmic-facing. A helical membrane pass occupies residues 135–157 (LPKMFGIHLFLAGLLCFGFGAFH). At 158 to 196 (LTGLFGPGMWVSDPYGLTGSVQPVAPEWGPDGFNPYNPG) the chain is on the lumenal side. The helical transmembrane segment at 197–218 (GVVAHHIAAGIVGIIAGLFHIL) threads the bilayer. Over 219–233 (VRPPQRLYKALRMGN) the chain is Cytoplasmic. Residues 234-254 (IETVLSSSIAAVFFAAFVVAG) form a helical membrane-spanning segment. Over 255–450 (TMWYGSATTP…GIFRTSPRGW (196 aa)) the chain is Lumenal. Residues 451–473 (FTFAHAVFALLFFFGHIWHGART) traverse the membrane as a helical segment. The Cytoplasmic segment spans residues 474–510 (LFRDVFSGIDPELSPEQVEWGFYQKVGDVTTRRKEAV).

In terms of assembly, PSII is composed of 1 copy each of membrane proteins PsbA, PsbB, PsbC, PsbD, PsbE, PsbF, PsbH, PsbI, PsbJ, PsbK, PsbL, PsbM, PsbT, PsbX, PsbY, PsbZ, Psb30/Ycf12, peripheral proteins PsbO, CyanoQ (PsbQ), PsbU, PsbV and a large number of cofactors. It forms dimeric complexes. Part of a photosystem II (PSII) assembly intermediate complex PSII-I; crystallized from a strain deleted of psbJ, it forms monomeric PSII before addition of the oxygen evolving complex. PSII-I includes 3 assembly factors not found in mature PSII (Psb27, Psb28 and Psb34). Binds multiple chlorophylls. PSII binds additional chlorophylls, carotenoids and specific lipids. is required as a cofactor.

It is found in the cellular thylakoid membrane. In terms of biological role, one of the components of the core complex of photosystem II (PSII). It binds chlorophyll and helps catalyze the primary light-induced photochemical processes of PSII. PSII is a light-driven water:plastoquinone oxidoreductase, using light energy to abstract electrons from H(2)O, generating O(2) and a proton gradient subsequently used for ATP formation. This is Photosystem II CP47 reaction center protein from Thermosynechococcus vestitus (strain NIES-2133 / IAM M-273 / BP-1).